We begin with the raw amino-acid sequence, 161 residues long: Phosphopantetheine adenylyltransferase (161 aa).

Serine 9 contacts substrate. ATP contacts are provided by residues serine 9 to phenylalanine 10 and histidine 17. Positions 41, 73, and 87 each coordinate substrate. ATP-binding positions include glycine 88–arginine 90, glutamate 98, and phenylalanine 122–serine 128.

Belongs to the bacterial CoaD family. As to quaternary structure, homohexamer. Mg(2+) serves as cofactor.

It is found in the cytoplasm. It catalyses the reaction (R)-4'-phosphopantetheine + ATP + H(+) = 3'-dephospho-CoA + diphosphate. It functions in the pathway cofactor biosynthesis; coenzyme A biosynthesis; CoA from (R)-pantothenate: step 4/5. Reversibly transfers an adenylyl group from ATP to 4'-phosphopantetheine, yielding dephospho-CoA (dPCoA) and pyrophosphate. This chain is Phosphopantetheine adenylyltransferase, found in Nocardia farcinica (strain IFM 10152).